The chain runs to 506 residues: Histidine ammonia-lyase (506 aa).

Residues 143 to 145 (ASG) constitute a cross-link (5-imidazolinone (Ala-Gly)). Serine 144 bears the 2,3-didehydroalanine (Ser) mark.

The protein belongs to the PAL/histidase family. Post-translationally, contains an active site 4-methylidene-imidazol-5-one (MIO), which is formed autocatalytically by cyclization and dehydration of residues Ala-Ser-Gly.

Its subcellular location is the cytoplasm. It catalyses the reaction L-histidine = trans-urocanate + NH4(+). Its pathway is amino-acid degradation; L-histidine degradation into L-glutamate; N-formimidoyl-L-glutamate from L-histidine: step 1/3. This Salmonella gallinarum (strain 287/91 / NCTC 13346) protein is Histidine ammonia-lyase.